A 1173-amino-acid chain; its full sequence is DNA-directed RNA polymerase subunit beta (1173 aa).

Residues 1 to 23 form a disordered region; the sequence is MEGSLLVASSTSNNETANTASTD. Residues 8 to 22 show a composition bias toward low complexity; the sequence is ASSTSNNETANTAST.

This sequence belongs to the RNA polymerase beta chain family. In terms of assembly, the RNAP catalytic core consists of 2 alpha, 1 beta, 1 beta' and 1 omega subunit. When a sigma factor is associated with the core the holoenzyme is formed, which can initiate transcription.

The catalysed reaction is RNA(n) + a ribonucleoside 5'-triphosphate = RNA(n+1) + diphosphate. Its function is as follows. DNA-dependent RNA polymerase catalyzes the transcription of DNA into RNA using the four ribonucleoside triphosphates as substrates. The sequence is that of DNA-directed RNA polymerase subunit beta from Paenarthrobacter aurescens (strain TC1).